We begin with the raw amino-acid sequence, 401 residues long: Haptoglobin (401 aa).

The first 18 residues, 1–18, serve as a signal peptide directing secretion; it reads MSALQAVVTLLLCGQLLA. Sushi domains follow at residues 28–83 and 85–142; these read DSCP…ECEE and DSCP…ECEA. Disulfide bonds link C49–C81, C106–C140, and C144–C261. The 243-residue stretch at 157–399 folds into the Peptidase S1 domain; sequence IIGGSLDAKG…ILDWVRKTIA (243 aa). N286 and N316 each carry an N-linked (GlcNAc...) asparagine glycan. Disulfide bonds link C304–C335 and C346–C376. The interaction with CD163 stretch occupies residues 313–318; the sequence is APKNKT.

The protein belongs to the peptidase S1 family. In terms of assembly, tetramer of two alpha and two beta chains; disulfide-linked. The hemoglobin/haptoglobin complex is composed of a haptoglobin dimer bound to two hemoglobin alpha-beta dimers. Interacts with CD163. Interacts with ERGIC3. Expressed by the liver and secreted in plasma.

It localises to the secreted. Its subcellular location is the extracellular space. Its function is as follows. As a result of hemolysis, hemoglobin is found to accumulate in the kidney and is secreted in the urine. Haptoglobin captures, and combines with free plasma hemoglobin to allow hepatic recycling of heme iron and to prevent kidney damage. Haptoglobin also acts as an antioxidant, has antibacterial activity and plays a role in modulating many aspects of the acute phase response. Hemoglobin/haptoglobin complexes are rapidly cleared by the macrophage CD163 scavenger receptor expressed on the surface of liver Kupfer cells through an endocytic lysosomal degradation pathway. This Bos taurus (Bovine) protein is Haptoglobin (HP).